A 341-amino-acid chain; its full sequence is MSQKFANTGSFIEREDLGKPNKGVDRVQKGFTAAYPTQSSIPYRHRRSVIPESEKRGFNSQARRFYSKKDDIPGPGFYNVIHQSLVFNSVSLSKRGTCTFPSTCARLGPIISKYPAANAYTIRSELASKKDFSNSCSSMFQLPTFIKVVKSETPAPNHYNASISICKQRNNVCARAGFLSKTPRGFVPSSEPGGPAPGHYDVNESLVRESPKVLVSCFKSKTGRGLKPTSTGPGPGYYNPNDQTKILRKSHLPKTTLLNFSAQPLPLPEKPPLPGPGQYEIVNYQGPPKHFISTASFVSNTSRWPVKSSKPTLPGPASYKPEIPGKQSFLYNEDNKWIPAV.

Over residues 1-10 (MSQKFANTGS) the composition is skewed to polar residues. The segment at 1–23 (MSQKFANTGSFIEREDLGKPNKG) is disordered. Basic and acidic residues predominate over residues 12–23 (IEREDLGKPNKG). STPGR repeat units follow at residues 73–80 (PGPGFYNV), 115–123 (PAANAYTIR), 154–160 (PAPNHYN), 194–213 (GPAP…SPKV), 232–254 (GPGP…HLPK), 273–284 (LPGPGQYEIVNY), and 313–323 (LPGPASYKPEI). The residue at position 78 (Tyr-78) is a Phosphotyrosine.

The protein belongs to the STPG1 family.

Its subcellular location is the cytoplasm. It is found in the nucleus. In terms of biological role, may positively contribute to the induction of apoptosis triggered by O(6)-methylguanine. The protein is O(6)-methylguanine-induced apoptosis 2 (Stpg1) of Rattus norvegicus (Rat).